Consider the following 212-residue polypeptide: Pyridoxine/pyridoxamine 5'-phosphate oxidase (212 aa).

FMN contacts are provided by residues 57-62 (RMVLLK), 72-73 (YT), Arg78, Lys79, and Gln101. Lys62 is a binding site for substrate. Residues Tyr119, Arg123, and Ser127 each coordinate substrate. FMN contacts are provided by residues 136–137 (QS) and Trp181. Position 187–189 (187–189 (RLH)) interacts with substrate. An FMN-binding site is contributed by Arg191.

Belongs to the pyridoxamine 5'-phosphate oxidase family. As to quaternary structure, homodimer. The cofactor is FMN.

It carries out the reaction pyridoxamine 5'-phosphate + O2 + H2O = pyridoxal 5'-phosphate + H2O2 + NH4(+). The catalysed reaction is pyridoxine 5'-phosphate + O2 = pyridoxal 5'-phosphate + H2O2. It functions in the pathway cofactor metabolism; pyridoxal 5'-phosphate salvage; pyridoxal 5'-phosphate from pyridoxamine 5'-phosphate: step 1/1. It participates in cofactor metabolism; pyridoxal 5'-phosphate salvage; pyridoxal 5'-phosphate from pyridoxine 5'-phosphate: step 1/1. Functionally, catalyzes the oxidation of either pyridoxine 5'-phosphate (PNP) or pyridoxamine 5'-phosphate (PMP) into pyridoxal 5'-phosphate (PLP). The polypeptide is Pyridoxine/pyridoxamine 5'-phosphate oxidase (Erythrobacter litoralis (strain HTCC2594)).